The chain runs to 317 residues: Fruit protein pKIWI502 (317 aa).

Residues Met1–His29 are disordered. The 112-residue stretch at Tyr71–Ile182 folds into the FAD-binding FR-type domain.

This Actinidia deliciosa (Kiwi) protein is Fruit protein pKIWI502.